Consider the following 324-residue polypeptide: Ribosomal RNA small subunit methyltransferase H (324 aa).

S-adenosyl-L-methionine contacts are provided by residues 47 to 49, Asp67, Leu96, Asp115, and Gln122; that span reads GGH.

It belongs to the methyltransferase superfamily. RsmH family.

The protein localises to the cytoplasm. The catalysed reaction is cytidine(1402) in 16S rRNA + S-adenosyl-L-methionine = N(4)-methylcytidine(1402) in 16S rRNA + S-adenosyl-L-homocysteine + H(+). In terms of biological role, specifically methylates the N4 position of cytidine in position 1402 (C1402) of 16S rRNA. In Halorhodospira halophila (strain DSM 244 / SL1) (Ectothiorhodospira halophila (strain DSM 244 / SL1)), this protein is Ribosomal RNA small subunit methyltransferase H.